The sequence spans 285 residues: Elongation factor Ts (285 aa).

Residues 84–87 are involved in Mg(2+) ion dislocation from EF-Tu; it reads TDFV.

It belongs to the EF-Ts family.

The protein localises to the cytoplasm. Its function is as follows. Associates with the EF-Tu.GDP complex and induces the exchange of GDP to GTP. It remains bound to the aminoacyl-tRNA.EF-Tu.GTP complex up to the GTP hydrolysis stage on the ribosome. This is Elongation factor Ts from Bifidobacterium animalis subsp. lactis (strain AD011).